The following is a 506-amino-acid chain: Tripartite terminase subunit 3 (506 aa).

Glutamate 128 serves as the catalytic For ATPase activity. Catalysis depends on for nuclease activity residues aspartate 282, glutamate 354, and aspartate 475.

The protein belongs to the herpesviridae TRM3 protein family. As to quaternary structure, interacts with the terminase subunits TRM1 and TRM2. Interacts with portal protein.

It is found in the host nucleus. Functionally, component of the molecular motor that translocates viral genomic DNA in empty capsid during DNA packaging. Forms a tripartite terminase complex together with TRM1 and TRM2 in the host cytoplasm. Once the complex reaches the host nucleus, it interacts with the capsid portal vertex. This portal forms a ring in which genomic DNA is translocated into the capsid. TRM3 carries an RNase H-like nuclease activity that plays an important role for the cleavage of concatemeric viral DNA into unit length genomes. The sequence is that of Tripartite terminase subunit 3 from Amazona oratrix (yellow-headed parrot).